The chain runs to 189 residues: Protein GrpE (189 aa).

The segment at 1-24 (MADEQTVDTQNPEANQAPEASGDD) is disordered.

This sequence belongs to the GrpE family. In terms of assembly, homodimer.

The protein resides in the cytoplasm. Functionally, participates actively in the response to hyperosmotic and heat shock by preventing the aggregation of stress-denatured proteins, in association with DnaK and GrpE. It is the nucleotide exchange factor for DnaK and may function as a thermosensor. Unfolded proteins bind initially to DnaJ; upon interaction with the DnaJ-bound protein, DnaK hydrolyzes its bound ATP, resulting in the formation of a stable complex. GrpE releases ADP from DnaK; ATP binding to DnaK triggers the release of the substrate protein, thus completing the reaction cycle. Several rounds of ATP-dependent interactions between DnaJ, DnaK and GrpE are required for fully efficient folding. The polypeptide is Protein GrpE (Pseudomonas fluorescens (strain Pf0-1)).